Here is a 269-residue protein sequence, read N- to C-terminus: 4-hydroxy-tetrahydrodipicolinate reductase (269 aa).

NAD(+)-binding positions include 8–13 (GAAGRM) and glutamate 34. Residue arginine 35 coordinates NADP(+). NAD(+) contacts are provided by residues 98–100 (GTT) and 122–125 (APNY). Catalysis depends on histidine 155, which acts as the Proton donor/acceptor. Residue histidine 156 participates in (S)-2,3,4,5-tetrahydrodipicolinate binding. Lysine 159 acts as the Proton donor in catalysis. 165-166 (GT) contributes to the (S)-2,3,4,5-tetrahydrodipicolinate binding site.

It belongs to the DapB family.

The protein resides in the cytoplasm. It catalyses the reaction (S)-2,3,4,5-tetrahydrodipicolinate + NAD(+) + H2O = (2S,4S)-4-hydroxy-2,3,4,5-tetrahydrodipicolinate + NADH + H(+). The enzyme catalyses (S)-2,3,4,5-tetrahydrodipicolinate + NADP(+) + H2O = (2S,4S)-4-hydroxy-2,3,4,5-tetrahydrodipicolinate + NADPH + H(+). It functions in the pathway amino-acid biosynthesis; L-lysine biosynthesis via DAP pathway; (S)-tetrahydrodipicolinate from L-aspartate: step 4/4. Catalyzes the conversion of 4-hydroxy-tetrahydrodipicolinate (HTPA) to tetrahydrodipicolinate. In Vibrio atlanticus (strain LGP32) (Vibrio splendidus (strain Mel32)), this protein is 4-hydroxy-tetrahydrodipicolinate reductase.